The primary structure comprises 218 residues: Thiamine-phosphate synthase (218 aa).

4-amino-2-methyl-5-(diphosphooxymethyl)pyrimidine is bound by residues 46 to 50 (QFRDK) and D83. Mg(2+) is bound by residues D84 and D103. 4-amino-2-methyl-5-(diphosphooxymethyl)pyrimidine is bound at residue S122. 149–151 (TNS) provides a ligand contact to 2-[(2R,5Z)-2-carboxy-4-methylthiazol-5(2H)-ylidene]ethyl phosphate. Residue K152 coordinates 4-amino-2-methyl-5-(diphosphooxymethyl)pyrimidine. Residues G181 and 201–202 (IT) each bind 2-[(2R,5Z)-2-carboxy-4-methylthiazol-5(2H)-ylidene]ethyl phosphate.

This sequence belongs to the thiamine-phosphate synthase family. Requires Mg(2+) as cofactor.

It catalyses the reaction 2-[(2R,5Z)-2-carboxy-4-methylthiazol-5(2H)-ylidene]ethyl phosphate + 4-amino-2-methyl-5-(diphosphooxymethyl)pyrimidine + 2 H(+) = thiamine phosphate + CO2 + diphosphate. It carries out the reaction 2-(2-carboxy-4-methylthiazol-5-yl)ethyl phosphate + 4-amino-2-methyl-5-(diphosphooxymethyl)pyrimidine + 2 H(+) = thiamine phosphate + CO2 + diphosphate. The catalysed reaction is 4-methyl-5-(2-phosphooxyethyl)-thiazole + 4-amino-2-methyl-5-(diphosphooxymethyl)pyrimidine + H(+) = thiamine phosphate + diphosphate. Its pathway is cofactor biosynthesis; thiamine diphosphate biosynthesis; thiamine phosphate from 4-amino-2-methyl-5-diphosphomethylpyrimidine and 4-methyl-5-(2-phosphoethyl)-thiazole: step 1/1. Its function is as follows. Condenses 4-methyl-5-(beta-hydroxyethyl)thiazole monophosphate (THZ-P) and 2-methyl-4-amino-5-hydroxymethyl pyrimidine pyrophosphate (HMP-PP) to form thiamine monophosphate (TMP). The protein is Thiamine-phosphate synthase of Actinobacillus pleuropneumoniae serotype 7 (strain AP76).